We begin with the raw amino-acid sequence, 232 residues long: Phosphate-specific transport system accessory protein PhoU homolog 1 (232 aa).

It belongs to the PhoU family. As to quaternary structure, homodimer.

It localises to the cytoplasm. Functionally, plays a role in the regulation of phosphate uptake. The chain is Phosphate-specific transport system accessory protein PhoU homolog 1 (phoU1) from Thermotoga maritima (strain ATCC 43589 / DSM 3109 / JCM 10099 / NBRC 100826 / MSB8).